A 180-amino-acid polypeptide reads, in one-letter code: Cytokinin-beta-glucosidase 4 (180 aa).

Its function is as follows. Hydrolyzes cytokinin glucosides thus liberating free cytokinins. This is Cytokinin-beta-glucosidase 4 (ROLC4) from Panax ginseng (Korean ginseng).